Reading from the N-terminus, the 511-residue chain is Bifunctional purine biosynthesis protein PurH (511 aa).

One can recognise an MGS-like domain in the interval 1–146; that stretch reads MGRLALISVT…KNFAHLTVIS (146 aa).

This sequence belongs to the PurH family.

It catalyses the reaction (6R)-10-formyltetrahydrofolate + 5-amino-1-(5-phospho-beta-D-ribosyl)imidazole-4-carboxamide = 5-formamido-1-(5-phospho-D-ribosyl)imidazole-4-carboxamide + (6S)-5,6,7,8-tetrahydrofolate. It carries out the reaction IMP + H2O = 5-formamido-1-(5-phospho-D-ribosyl)imidazole-4-carboxamide. Its pathway is purine metabolism; IMP biosynthesis via de novo pathway; 5-formamido-1-(5-phospho-D-ribosyl)imidazole-4-carboxamide from 5-amino-1-(5-phospho-D-ribosyl)imidazole-4-carboxamide (10-formyl THF route): step 1/1. It functions in the pathway purine metabolism; IMP biosynthesis via de novo pathway; IMP from 5-formamido-1-(5-phospho-D-ribosyl)imidazole-4-carboxamide: step 1/1. The polypeptide is Bifunctional purine biosynthesis protein PurH (Microcystis aeruginosa (strain NIES-843 / IAM M-2473)).